A 706-amino-acid chain; its full sequence is MTIRNILVTSALPYANGSIHLGHLVEYIQTDIWVRFQKMQGHTVYYVCADDTHGTPVMLRAEKEGISPEALIARVHAEHLRDFTGFHIAFDQYYSTHSDETRYYAEDIYRKLKEAGLIAVRAIEQLYDPIKNLFLPDRFVKGECPKCGAAEQYGDSCEACGAAYTPTELKNPYSAVSGATPVRKTSEHFFFKLSDSRCADFLRRWTHEGNHLQAEAANKMAEWLGEAGENKLSDWDISRDAPYFGFEIPGETGKYFYVWLDAPIGYMGSFKKLCARKGIDFDAYWKKDSTTELYHFIGKDILYFHALFWPAMLENAGYRTPTQIFAHGFLTVNGEKMSKSRGTFITAESYLEQGLNPEWLRYYYAAKLNGSMEDIDLNLDDFVARVNSDLVGKYINIASRCAGFISKRFGGKLVSGEDYRLLQQMVDEHFAGWQPGVIEAAYEARDFSAAVRHIMRRADEVNELIHELAPWEIARDETRERELHRACSLGIQMFYLLSCYLKPILPRTAAQIEDFLNLGELSWQKQQAGQPLSDTLLPPGHVINPYQHLMTRIDPKQITALITANQQTMQQTMNTETESHSPQRHGQAQQHPVAPIAETISIEDFVKIDLRIARIVDAQHVPGADKLLQLTLDIGSEQRTVFAGIKSAYDPEQLKGRLTVMVANLAPRKMKFGLSEGMVLAASGENGGGPFLLAPDSGAQPGMRVK.

Residues 13-23 carry the 'HIGH' region motif; sequence PYANGSIHLGH. Residues cysteine 144, cysteine 147, cysteine 157, and cysteine 160 each contribute to the Zn(2+) site. The 'KMSKS' region motif lies at 336-340; that stretch reads KMSKS. Lysine 339 serves as a coordination point for ATP. Residues 570–593 are disordered; the sequence is QQTMNTETESHSPQRHGQAQQHPV. The tRNA-binding domain maps to 604 to 706; sequence DFVKIDLRIA…SGAQPGMRVK (103 aa).

The protein belongs to the class-I aminoacyl-tRNA synthetase family. MetG type 1 subfamily. Homodimer. Requires Zn(2+) as cofactor.

It localises to the cytoplasm. The catalysed reaction is tRNA(Met) + L-methionine + ATP = L-methionyl-tRNA(Met) + AMP + diphosphate. Functionally, is required not only for elongation of protein synthesis but also for the initiation of all mRNA translation through initiator tRNA(fMet) aminoacylation. In Nitrosomonas europaea (strain ATCC 19718 / CIP 103999 / KCTC 2705 / NBRC 14298), this protein is Methionine--tRNA ligase.